A 247-amino-acid polypeptide reads, in one-letter code: Pyrroloquinoline-quinone synthase (247 aa).

Belongs to the PqqC family.

The catalysed reaction is 6-(2-amino-2-carboxyethyl)-7,8-dioxo-1,2,3,4,7,8-hexahydroquinoline-2,4-dicarboxylate + 3 O2 = pyrroloquinoline quinone + 2 H2O2 + 2 H2O + H(+). The protein operates within cofactor biosynthesis; pyrroloquinoline quinone biosynthesis. In terms of biological role, ring cyclization and eight-electron oxidation of 3a-(2-amino-2-carboxyethyl)-4,5-dioxo-4,5,6,7,8,9-hexahydroquinoline-7,9-dicarboxylic-acid to PQQ. In Rhizobium rhizogenes (strain K84 / ATCC BAA-868) (Agrobacterium radiobacter), this protein is Pyrroloquinoline-quinone synthase.